A 365-amino-acid chain; its full sequence is Heme A synthase (365 aa).

5 helical membrane-spanning segments follow: residues 23 to 43 (LLRIWLRVVLFTLFCLVLVGG), 109 to 129 (LLARTIGLVFALPLAFFWLTG), 137 to 157 (LPLVGLLALGGFQGFVGWWMV), 172 to 192 (LATHLTIACLIFAGCMWILRG), and 208 to 228 (GFAALLTVLCLFQIYLGALVA). His-272 contributes to the heme binding site. 3 consecutive transmembrane segments (helical) span residues 274–294 (LGAYTLFAATLWHMVSMARAL), 303–323 (AVLFFVLISVQAGLGITTLLM), and 327–347 (IHVALAHQGMALILLGFSVAH). His-333 contacts heme.

The protein belongs to the COX15/CtaA family. Type 2 subfamily. In terms of assembly, interacts with CtaB. Heme b serves as cofactor.

The protein resides in the cell membrane. It carries out the reaction Fe(II)-heme o + 2 A + H2O = Fe(II)-heme a + 2 AH2. Its pathway is porphyrin-containing compound metabolism; heme A biosynthesis; heme A from heme O: step 1/1. Catalyzes the conversion of heme O to heme A by two successive hydroxylations of the methyl group at C8. The first hydroxylation forms heme I, the second hydroxylation results in an unstable dihydroxymethyl group, which spontaneously dehydrates, resulting in the formyl group of heme A. This chain is Heme A synthase, found in Agrobacterium fabrum (strain C58 / ATCC 33970) (Agrobacterium tumefaciens (strain C58)).